The sequence spans 206 residues: 2,3-bisphosphoglycerate-dependent phosphoglycerate mutase (206 aa).

Substrate contacts are provided by residues 9–16 (RHGQSEWN), 22–23 (TG), Arg-61, 88–91 (ERDY), Lys-99, 115–116 (RR), and 159–160 (GN). The active-site Tele-phosphohistidine intermediate is His-10. Glu-88 functions as the Proton donor/acceptor in the catalytic mechanism.

This sequence belongs to the phosphoglycerate mutase family. BPG-dependent PGAM subfamily. Homodimer.

The catalysed reaction is (2R)-2-phosphoglycerate = (2R)-3-phosphoglycerate. It functions in the pathway carbohydrate degradation; glycolysis; pyruvate from D-glyceraldehyde 3-phosphate: step 3/5. Catalyzes the interconversion of 2-phosphoglycerate and 3-phosphoglycerate. In Bartonella quintana (strain Toulouse) (Rochalimaea quintana), this protein is 2,3-bisphosphoglycerate-dependent phosphoglycerate mutase.